A 299-amino-acid chain; its full sequence is GTP cyclohydrolase FolE2 (299 aa).

This sequence belongs to the GTP cyclohydrolase IV family.

It carries out the reaction GTP + H2O = 7,8-dihydroneopterin 3'-triphosphate + formate + H(+). The protein operates within cofactor biosynthesis; 7,8-dihydroneopterin triphosphate biosynthesis; 7,8-dihydroneopterin triphosphate from GTP: step 1/1. Functionally, converts GTP to 7,8-dihydroneopterin triphosphate. The protein is GTP cyclohydrolase FolE2 of Citrobacter koseri (strain ATCC BAA-895 / CDC 4225-83 / SGSC4696).